The following is a 288-amino-acid chain: Acetyl-coenzyme A carboxylase carboxyl transferase subunit beta (288 aa).

The region spanning 34 to 288 (LFAKCPACKH…HLVAFHGGVS (255 aa)) is the CoA carboxyltransferase N-terminal domain. 4 residues coordinate Zn(2+): Cys-38, Cys-41, Cys-56, and Cys-59. The C4-type zinc finger occupies 38–59 (CPACKHMIYQKDLGPAKICPTC).

The protein belongs to the AccD/PCCB family. As to quaternary structure, acetyl-CoA carboxylase is a heterohexamer composed of biotin carboxyl carrier protein (AccB), biotin carboxylase (AccC) and two subunits each of ACCase subunit alpha (AccA) and ACCase subunit beta (AccD). Zn(2+) is required as a cofactor.

It is found in the cytoplasm. The catalysed reaction is N(6)-carboxybiotinyl-L-lysyl-[protein] + acetyl-CoA = N(6)-biotinyl-L-lysyl-[protein] + malonyl-CoA. It functions in the pathway lipid metabolism; malonyl-CoA biosynthesis; malonyl-CoA from acetyl-CoA: step 1/1. Component of the acetyl coenzyme A carboxylase (ACC) complex. Biotin carboxylase (BC) catalyzes the carboxylation of biotin on its carrier protein (BCCP) and then the CO(2) group is transferred by the transcarboxylase to acetyl-CoA to form malonyl-CoA. In Streptococcus equi subsp. zooepidemicus (strain H70), this protein is Acetyl-coenzyme A carboxylase carboxyl transferase subunit beta.